The chain runs to 211 residues: Cytochrome c biogenesis ATP-binding export protein CcmA (211 aa).

The 203-residue stretch at Leu8 to Val210 folds into the ABC transporter domain. ATP is bound at residue Gly40–Thr47.

Belongs to the ABC transporter superfamily. CcmA exporter (TC 3.A.1.107) family. As to quaternary structure, the complex is composed of two ATP-binding proteins (CcmA) and two transmembrane proteins (CcmB).

The protein localises to the cell inner membrane. It catalyses the reaction heme b(in) + ATP + H2O = heme b(out) + ADP + phosphate + H(+). Its function is as follows. Part of the ABC transporter complex CcmAB involved in the biogenesis of c-type cytochromes; once thought to export heme, this seems not to be the case, but its exact role is uncertain. Responsible for energy coupling to the transport system. The sequence is that of Cytochrome c biogenesis ATP-binding export protein CcmA from Hahella chejuensis (strain KCTC 2396).